Reading from the N-terminus, the 230-residue chain is Ureidoacrylate amidohydrolase RutB (230 aa).

Asp-24 acts as the Proton acceptor in catalysis. Lys-133 is a catalytic residue. Cys-166 serves as the catalytic Nucleophile.

Belongs to the isochorismatase family. RutB subfamily.

The catalysed reaction is (Z)-3-ureidoacrylate + H2O + H(+) = (Z)-3-aminoacrylate + NH4(+) + CO2. It catalyses the reaction (Z)-3-ureidoacrylate + H2O = (Z)-3-aminoacrylate + carbamate + H(+). The enzyme catalyses (Z)-2-methylureidoacrylate + H2O + H(+) = (Z)-2-methylaminoacrylate + NH4(+) + CO2. In terms of biological role, hydrolyzes ureidoacrylate to form aminoacrylate and carbamate. The carbamate hydrolyzes spontaneously, thereby releasing one of the nitrogen atoms of the pyrimidine ring as ammonia and one of its carbon atoms as CO2. This chain is Ureidoacrylate amidohydrolase RutB, found in Escherichia coli O103:H2 (strain 12009 / EHEC).